A 251-amino-acid chain; its full sequence is Triosephosphate isomerase (251 aa).

9-11 serves as a coordination point for substrate; that stretch reads NWK. H95 functions as the Electrophile in the catalytic mechanism. E167 acts as the Proton acceptor in catalysis. Residues G173, S212, and 233-234 each bind substrate; that span reads GG.

It belongs to the triosephosphate isomerase family. In terms of assembly, homodimer.

It localises to the cytoplasm. It carries out the reaction D-glyceraldehyde 3-phosphate = dihydroxyacetone phosphate. Its pathway is carbohydrate biosynthesis; gluconeogenesis. It functions in the pathway carbohydrate degradation; glycolysis; D-glyceraldehyde 3-phosphate from glycerone phosphate: step 1/1. Functionally, involved in the gluconeogenesis. Catalyzes stereospecifically the conversion of dihydroxyacetone phosphate (DHAP) to D-glyceraldehyde-3-phosphate (G3P). The protein is Triosephosphate isomerase of Pseudomonas syringae pv. tomato (strain ATCC BAA-871 / DC3000).